The chain runs to 228 residues: Outer membrane protein assembly factor BamE (228 aa).

Residues 1-29 form the signal peptide; it reads MNPILKGVYSPARLGVVALTLFGILGVTG. The N-palmitoyl cysteine moiety is linked to residue Cys30. Cys30 carries the S-diacylglycerol cysteine lipid modification. The disordered stretch occupies residues 197–228; sequence DFFGSSKKDPDPQSPQLGPGTLNDVPKPADSK.

This sequence belongs to the BamE family. Part of the Bam complex.

It localises to the cell outer membrane. Functionally, part of the outer membrane protein assembly complex, which is involved in assembly and insertion of beta-barrel proteins into the outer membrane. This is Outer membrane protein assembly factor BamE from Polynucleobacter necessarius subsp. necessarius (strain STIR1).